We begin with the raw amino-acid sequence, 149 residues long: MHCPFCFAVDTKVIDSRLVGEGSSVRRRRQCLVCNERFTTFEVAELVMPRVVKSNDVREPFNEEKLRSGMLRALEKRPVSSDDVEMAISHIKSQLRATGEREVPSKMIGNLVMEQLKKLDKVAYIRFASVYRSFEDIKEFGEEIARLED.

The segment at 3–34 (CPFCFAVDTKVIDSRLVGEGSSVRRRRQCLVC) is a zinc-finger region. The ATP-cone domain occupies 49-139 (PRVVKSNDVR…VYRSFEDIKE (91 aa)).

This sequence belongs to the NrdR family. Requires Zn(2+) as cofactor.

In terms of biological role, negatively regulates transcription of bacterial ribonucleotide reductase nrd genes and operons by binding to NrdR-boxes. In Escherichia fergusonii (strain ATCC 35469 / DSM 13698 / CCUG 18766 / IAM 14443 / JCM 21226 / LMG 7866 / NBRC 102419 / NCTC 12128 / CDC 0568-73), this protein is Transcriptional repressor NrdR.